Consider the following 98-residue polypeptide: Defensin-like protein 219 (98 aa).

The first 16 residues, 1–16, serve as a signal peptide directing secretion; sequence MKTIFVFLTLAVLVSS. Intrachain disulfides connect Cys-68–Cys-85, Cys-71–Cys-90, and Cys-75–Cys-92.

Belongs to the DEFL family.

Its subcellular location is the secreted. The chain is Defensin-like protein 219 from Arabidopsis thaliana (Mouse-ear cress).